The primary structure comprises 95 residues: MSVDAATVRRIAHLARIAVSEGEVPHLQGELNAMLAFVEQLSEVNVEGVEAMTSVTPMQMKKRQDVVNDGEIADDIVANAPATEGHFFLVPKVVE.

This sequence belongs to the GatC family. In terms of assembly, heterotrimer of A, B and C subunits.

It catalyses the reaction L-glutamyl-tRNA(Gln) + L-glutamine + ATP + H2O = L-glutaminyl-tRNA(Gln) + L-glutamate + ADP + phosphate + H(+). It carries out the reaction L-aspartyl-tRNA(Asn) + L-glutamine + ATP + H2O = L-asparaginyl-tRNA(Asn) + L-glutamate + ADP + phosphate + 2 H(+). Allows the formation of correctly charged Asn-tRNA(Asn) or Gln-tRNA(Gln) through the transamidation of misacylated Asp-tRNA(Asn) or Glu-tRNA(Gln) in organisms which lack either or both of asparaginyl-tRNA or glutaminyl-tRNA synthetases. The reaction takes place in the presence of glutamine and ATP through an activated phospho-Asp-tRNA(Asn) or phospho-Glu-tRNA(Gln). The polypeptide is Aspartyl/glutamyl-tRNA(Asn/Gln) amidotransferase subunit C (Bradyrhizobium diazoefficiens (strain JCM 10833 / BCRC 13528 / IAM 13628 / NBRC 14792 / USDA 110)).